The following is a 549-amino-acid chain: ATP synthase subunit alpha (549 aa).

An ATP-binding site is contributed by 172–179; that stretch reads GDRKTGKT. Positions 513 to 549 are disordered; sequence SSTGESVVPDEHVEAMDEEDLGKESVKVKKPAPQKKK. The segment covering 540–549 has biased composition (basic residues); sequence VKKPAPQKKK.

This sequence belongs to the ATPase alpha/beta chains family. In terms of assembly, F-type ATPases have 2 components, CF(1) - the catalytic core - and CF(0) - the membrane proton channel. CF(1) has five subunits: alpha(3), beta(3), gamma(1), delta(1), epsilon(1). CF(0) has three main subunits: a(1), b(2) and c(9-12). The alpha and beta chains form an alternating ring which encloses part of the gamma chain. CF(1) is attached to CF(0) by a central stalk formed by the gamma and epsilon chains, while a peripheral stalk is formed by the delta and b chains.

The protein localises to the cell membrane. It catalyses the reaction ATP + H2O + 4 H(+)(in) = ADP + phosphate + 5 H(+)(out). Functionally, produces ATP from ADP in the presence of a proton gradient across the membrane. The alpha chain is a regulatory subunit. The polypeptide is ATP synthase subunit alpha (Mycobacterium ulcerans (strain Agy99)).